Consider the following 564-residue polypeptide: Phenylalanine--tRNA ligase beta subunit (564 aa).

The 77-residue stretch at 286–362 folds into the B5 domain; that stretch reads YFQNSLKINV…IGKGLDNFKS (77 aa). The Mg(2+) site is built by Asp340, Asp346, Glu349, and Glu350.

The protein belongs to the phenylalanyl-tRNA synthetase beta subunit family. Type 2 subfamily. In terms of assembly, tetramer of two alpha and two beta subunits. The cofactor is Mg(2+).

It localises to the cytoplasm. It catalyses the reaction tRNA(Phe) + L-phenylalanine + ATP = L-phenylalanyl-tRNA(Phe) + AMP + diphosphate + H(+). The sequence is that of Phenylalanine--tRNA ligase beta subunit from Borrelia duttonii (strain Ly).